The primary structure comprises 819 residues: uncharacterized protein (819 aa).

Residue S16 is modified to Phosphoserine. Disordered regions lie at residues 28 to 83 (SNTQ…PPTV) and 96 to 134 (PTFTLSVSPDSQSSSATHQNDYISSPHADFSFSPPASKI). The segment at residues 36–63 (KIRFTENENDLSPERAQKEPVSIPHGRY) is a DNA-binding region (zn(2)-C6 fungal-type). 2 stretches are compositionally biased toward polar residues: residues 64-77 (TWSTSPDTDSSHLP) and 96-118 (PTFTLSVSPDSQSSSATHQNDYI).

The protein resides in the nucleus. This is an uncharacterized protein from Schizosaccharomyces pombe (strain 972 / ATCC 24843) (Fission yeast).